The chain runs to 539 residues: 2,3-dihydroxybenzoate-AMP ligase (539 aa).

Glycine 191 is an ATP binding site. Substrate is bound by residues histidine 234–asparagine 235 and serine 240. Residues glycine 307, valine 329, aspartate 413, arginine 428, and lysine 519 each coordinate ATP. Lysine 519 is a binding site for substrate.

Belongs to the ATP-dependent AMP-binding enzyme family.

It localises to the cytoplasm. It catalyses the reaction 2,3-dihydroxybenzoate + holo-[ACP] + ATP = 2,3-dihydroxybenzoyl-[ACP] + AMP + diphosphate. It functions in the pathway siderophore biosynthesis; bacillibactin biosynthesis. Functionally, involved in the biosynthesis of the catecholic siderophore bacillibactin. Catalyzes the activation of the carboxylate group of 2,3-dihydroxy-benzoate (DHB), via ATP-dependent PPi exchange reactions, to the acyladenylate. This chain is 2,3-dihydroxybenzoate-AMP ligase, found in Bacillus subtilis (strain 168).